Consider the following 353-residue polypeptide: G-protein coupled estrogen receptor 1 (353 aa).

Residues 1 to 40 (MEEQTTNVIQIYVNGTEQFNASFDFNITDVKESTDTYEFY) are Extracellular-facing. The chain crosses the membrane as a helical span at residues 41–61 (IIGLFLSCLYTIFLFPIGFIG). Residues 62-81 (NILILVVNLNHRERMTIPDL) are Cytoplasmic-facing. A helical membrane pass occupies residues 82–102 (YFVNLAVADLILVADSLIEVF). The Extracellular segment spans residues 103–112 (NLNEKYYDYA). A helical membrane pass occupies residues 113-133 (VLCTFMSLFLQVNMYSSIFFL). A disulfide bridge connects residues C115 and C192. Over 134-160 (TWMSFDRYVALTSSMSSSPLRTMQHAK) the chain is Cytoplasmic. A helical transmembrane segment spans residues 161–181 (LSCSLIWMASILATLLPFTIV). At 182 to 202 (QTQHTGEVHFCFANVFEIQWL) the chain is on the extracellular side. A helical transmembrane segment spans residues 203-223 (EVTIGFLIPFSIIGLCYSLIV). Residues 224 to 245 (RTLMRAQKHKGLWPRRQKALRM) are Cytoplasmic-facing. The chain crosses the membrane as a helical span at residues 246–266 (IVVVVLVFFICWLPENVFISI). The Extracellular portion of the chain corresponds to 267 to 292 (QLLQGTADPSKRTDTTLWHDYPLTGH). Residues 293 to 313 (IVNLAAFSNSCLNPIIYSFLG) traverse the membrane as a helical segment. The Cytoplasmic portion of the chain corresponds to 314-353 (ETFRDKLRLFIKRKASWSVVYRFCNHTLDLQIPVRSESEV).

Belongs to the G-protein coupled receptor 1 family. As to quaternary structure, homodimer. Heterodimer. As to expression, expressed in brain regions that are known to control reproduction and sex behavior. Expressed in ovary, muscle and intestine. Expressed in early germ cells of the testis, including the spermatogonia, spermatocytes, and somatic cells such as Sertoli cells.

It localises to the nucleus. Its subcellular location is the cytoplasm. The protein resides in the perinuclear region. It is found in the cytoskeleton. The protein localises to the cytoplasmic vesicle membrane. It localises to the cell membrane. Its subcellular location is the basolateral cell membrane. The protein resides in the endoplasmic reticulum membrane. It is found in the early endosome. The protein localises to the recycling endosome. It localises to the golgi apparatus. Its subcellular location is the trans-Golgi network. The protein resides in the golgi apparatus membrane. It is found in the cell projection. The protein localises to the dendrite. It localises to the dendritic spine membrane. Its subcellular location is the axon. The protein resides in the postsynaptic density. It is found in the mitochondrion membrane. Its function is as follows. Membrane G-protein coupled estrogen receptor that binds to 17-beta-estradiol (E2) with high affinity, leading to rapid and transient activation of numerous intracellular signaling pathways. Plays a role in the embryonic development of sensory and motor neurons. Specifically induces apoptosis and reduces proliferation of brain cells. Involved in maintenance of meiotic arrest in oocytes. This is G-protein coupled estrogen receptor 1 (gper1) from Danio rerio (Zebrafish).